Consider the following 206-residue polypeptide: Protein YOP1 (206 aa).

At 1 to 52 (MAAHSEQIKNNFLNNPYAQQVFNIANGQVSALDAELNKYPILRQLEQQTKVP) the chain is on the cytoplasmic side. The chain crosses the membrane as a helical span at residues 53 to 72 (KAYGVIALGFSSVLLIFFNM). The Lumenal portion of the chain corresponds to 73–74 (FG). A helical transmembrane segment spans residues 75-95 (LAQPISNLIGWALPAYLSILA). Over 96-105 (IESPQTNDDK) the chain is Cytoplasmic. Residues 106–122 (QWLTYWVVFGSLNLVES) traverse the membrane as a helical segment. At 123-126 (MGLR) the chain is on the lumenal side. A helical transmembrane segment spans residues 127–145 (AVLYWVPMYFVFKTLFTIW). The Cytoplasmic segment spans residues 146-206 (LMLPATRGAE…PSSFAHEKTL (61 aa)). Residues 177–206 (FGTSDPLAKETGFNPAGTTAPSSFAHEKTL) form a disordered region.

Belongs to the DP1 family. Oligomer.

The protein resides in the endoplasmic reticulum membrane. It is found in the golgi apparatus membrane. Its function is as follows. Required to generate and maintain the structure of the tubular endoplasmic reticulum network and the vacuole. Induces high curvature in membranes and causes membrane tubule formation. Involved in membrane/vesicle trafficking. This is Protein YOP1 (YOP1) from Cryptococcus neoformans var. neoformans serotype D (strain B-3501A) (Filobasidiella neoformans).